A 195-amino-acid chain; its full sequence is Large ribosomal subunit protein uL5 (195 aa).

The protein belongs to the universal ribosomal protein uL5 family. Part of the 50S ribosomal subunit; part of the 5S rRNA/L5/L18/L25 subcomplex. Contacts the 5S rRNA and the P site tRNA. Forms a bridge to the 30S subunit in the 70S ribosome.

Functionally, this is one of the proteins that bind and probably mediate the attachment of the 5S RNA into the large ribosomal subunit, where it forms part of the central protuberance. In the 70S ribosome it contacts protein S13 of the 30S subunit (bridge B1b), connecting the 2 subunits; this bridge is implicated in subunit movement. Contacts the P site tRNA; the 5S rRNA and some of its associated proteins might help stabilize positioning of ribosome-bound tRNAs. This chain is Large ribosomal subunit protein uL5, found in Leifsonia xyli subsp. xyli (strain CTCB07).